A 372-amino-acid polypeptide reads, in one-letter code: G patch domain and ankyrin repeat-containing protein 1 (372 aa).

The segment at aspartate 74–arginine 110 is disordered. ANK repeat units follow at residues leucine 124–alanine 155 and phenylalanine 156–valine 186. Disordered stretches follow at residues arginine 211–phenylalanine 233 and alanine 251–threonine 271. A compositionally biased stretch (polar residues) spans proline 220–phenylalanine 233. The G-patch domain occupies threonine 271–proline 317. Residue lysine 306 forms a Glycyl lysine isopeptide (Lys-Gly) (interchain with G-Cter in SUMO2) linkage. Composition is skewed to basic and acidic residues over residues threonine 330–proline 340 and arginine 348–glycine 357. The segment at threonine 330–glycine 357 is disordered.

In Mus musculus (Mouse), this protein is G patch domain and ankyrin repeat-containing protein 1 (Gpank1).